We begin with the raw amino-acid sequence, 390 residues long: Probable tRNA pseudouridine synthase D 2 (390 aa).

Asp-93 functions as the Nucleophile in the catalytic mechanism. One can recognise a TRUD domain in the interval 166–353; that stretch reads YVLNYYGIQR…YGTRRKMVTP (188 aa).

Belongs to the pseudouridine synthase TruD family.

It catalyses the reaction uridine(13) in tRNA = pseudouridine(13) in tRNA. Could be responsible for synthesis of pseudouridine from uracil-13 in transfer RNAs. In Methanococcus maripaludis (strain DSM 14266 / JCM 13030 / NBRC 101832 / S2 / LL), this protein is Probable tRNA pseudouridine synthase D 2.